A 406-amino-acid polypeptide reads, in one-letter code: 2,3-bisphosphoglycerate-independent phosphoglycerate mutase (406 aa).

Positions 156–165 (ITEGDPHKEG) are enriched in basic and acidic residues. The tract at residues 156–177 (ITEGDPHKEGVPIPEVKPLDNS) is disordered.

This sequence belongs to the BPG-independent phosphoglycerate mutase family. A-PGAM subfamily.

The catalysed reaction is (2R)-2-phosphoglycerate = (2R)-3-phosphoglycerate. It participates in carbohydrate degradation; glycolysis; pyruvate from D-glyceraldehyde 3-phosphate: step 3/5. Functionally, catalyzes the interconversion of 2-phosphoglycerate and 3-phosphoglycerate. The protein is 2,3-bisphosphoglycerate-independent phosphoglycerate mutase of Methanococcus aeolicus (strain ATCC BAA-1280 / DSM 17508 / OCM 812 / Nankai-3).